A 400-amino-acid polypeptide reads, in one-letter code: Cytoplasmic tRNA 2-thiolation protein 2 (400 aa).

The protein belongs to the CTU2/NCS2 family.

Its subcellular location is the cytoplasm. It participates in tRNA modification; 5-methoxycarbonylmethyl-2-thiouridine-tRNA biosynthesis. Functionally, plays a central role in 2-thiolation of mcm(5)S(2)U at tRNA wobble positions of tRNA(Lys), tRNA(Glu) and tRNA(Gln). May act by forming a heterodimer with NCS6/CTU1 that ligates sulfur from thiocarboxylated URM1 onto the uridine of tRNAs at wobble position. The sequence is that of Cytoplasmic tRNA 2-thiolation protein 2 from Drosophila virilis (Fruit fly).